The chain runs to 323 residues: tRNA U34 carboxymethyltransferase (323 aa).

Carboxy-S-adenosyl-L-methionine contacts are provided by residues lysine 91, tryptophan 105, lysine 110, glycine 130, 152-154, 181-182, methionine 196, tyrosine 200, and arginine 315; these read DPT and IE.

It belongs to the class I-like SAM-binding methyltransferase superfamily. CmoB family. Homotetramer.

It catalyses the reaction carboxy-S-adenosyl-L-methionine + 5-hydroxyuridine(34) in tRNA = 5-carboxymethoxyuridine(34) in tRNA + S-adenosyl-L-homocysteine + H(+). Catalyzes carboxymethyl transfer from carboxy-S-adenosyl-L-methionine (Cx-SAM) to 5-hydroxyuridine (ho5U) to form 5-carboxymethoxyuridine (cmo5U) at position 34 in tRNAs. This is tRNA U34 carboxymethyltransferase from Escherichia coli O157:H7.